Reading from the N-terminus, the 1184-residue chain is DNA-directed RNA polymerase subunit beta (1184 aa).

Positions 1160-1184 (DDDFTNQNDAFNIVQPENAAAEKTE) are disordered.

The protein belongs to the RNA polymerase beta chain family. As to quaternary structure, the RNAP catalytic core consists of 2 alpha, 1 beta, 1 beta' and 1 omega subunit. When a sigma factor is associated with the core the holoenzyme is formed, which can initiate transcription.

The enzyme catalyses RNA(n) + a ribonucleoside 5'-triphosphate = RNA(n+1) + diphosphate. In terms of biological role, DNA-dependent RNA polymerase catalyzes the transcription of DNA into RNA using the four ribonucleoside triphosphates as substrates. The protein is DNA-directed RNA polymerase subunit beta of Listeria welshimeri serovar 6b (strain ATCC 35897 / DSM 20650 / CCUG 15529 / CIP 8149 / NCTC 11857 / SLCC 5334 / V8).